Reading from the N-terminus, the 951-residue chain is Pentatricopeptide repeat-containing protein At4g19220, mitochondrial (951 aa).

Residues 1–63 (MLLVMVRSST…RHFTSSVLSP (63 aa)) constitute a mitochondrion transit peptide. PPR repeat units follow at residues 121-151 (DLAT…LKEK), 152-186 (DVIV…GNEF), 187-221 (DSTT…GLVG), 222-252 (DSSL…MEHR), 253-287 (DIVS…GQEA), 288-322 (DTVT…GYSP), 325-355 (HVSV…LVCR), 356-386 (DVIS…MQSV), 392-426 (DIAT…EMQS), 428-458 (ALEV…TTHR), 459-489 (DLVS…VVSE), 496-530 (SLST…GFGD), 531-561 (NMLS…MSET), 563-597 (DLTS…GKIR), 599-629 (DLIT…AIKS), 634-668 (DTQL…NLCS), 669-695 (WNCV…LKLE), 697-731 (NEIT…GFQA), 732-762 (NPFV…SGVN), 763-793 (SISA…LSSN), 799-829 (NKSS…MEEK), and 835-865 (VTEH…IGEP). A type E motif region spans residues 870-945 (VWGALLSACN…LPGYSVIDVR (76 aa)).

Belongs to the PPR family. PCMP-E subfamily.

It is found in the mitochondrion. The polypeptide is Pentatricopeptide repeat-containing protein At4g19220, mitochondrial (PCMP-E2) (Arabidopsis thaliana (Mouse-ear cress)).